We begin with the raw amino-acid sequence, 338 residues long: Anthranilate phosphoribosyltransferase (338 aa).

5-phospho-alpha-D-ribose 1-diphosphate is bound by residues Gly-81, 84 to 85, Thr-89, 91 to 94, 109 to 117, and Ala-121; these read GD, NIST, and KHGNRALSS. Gly-81 contacts anthranilate. Residue Ser-93 participates in Mg(2+) binding. Residue Asn-112 coordinates anthranilate. Anthranilate is bound at residue Arg-167. Mg(2+) contacts are provided by Asp-225 and Glu-226.

The protein belongs to the anthranilate phosphoribosyltransferase family. Homodimer. It depends on Mg(2+) as a cofactor.

It carries out the reaction N-(5-phospho-beta-D-ribosyl)anthranilate + diphosphate = 5-phospho-alpha-D-ribose 1-diphosphate + anthranilate. It functions in the pathway amino-acid biosynthesis; L-tryptophan biosynthesis; L-tryptophan from chorismate: step 2/5. Catalyzes the transfer of the phosphoribosyl group of 5-phosphorylribose-1-pyrophosphate (PRPP) to anthranilate to yield N-(5'-phosphoribosyl)-anthranilate (PRA). The sequence is that of Anthranilate phosphoribosyltransferase from Rhizobium johnstonii (strain DSM 114642 / LMG 32736 / 3841) (Rhizobium leguminosarum bv. viciae).